The primary structure comprises 1852 residues: Chitin synthase csmA (1852 aa).

Positions Met-1–Ser-20 are disordered. The Myosin motor domain maps to Met-1–Glu-787. N-linked (GlcNAc...) asparagine glycosylation occurs at Asn-58. An ATP-binding site is contributed by Gly-102 to Thr-109. The interval Ser-599 to Lys-646 is disordered. An N-linked (GlcNAc...) asparagine glycan is attached at Asn-642. An actin-binding region spans residues Leu-667–Asp-691. An N-linked (GlcNAc...) asparagine glycan is attached at Asn-840. The next 2 membrane-spanning stretches (helical) occupy residues Trp-895–Gly-915 and Phe-930–Phe-950. The region spanning Gln-958–Phe-1017 is the Cytochrome b5 heme-binding domain. Residues Asn-1044 and Asn-1195 are each glycosylated (N-linked (GlcNAc...) asparagine). A helical transmembrane segment spans residues Phe-1205 to Leu-1225. N-linked (GlcNAc...) asparagine glycosylation is found at Asn-1428, Asn-1462, and Asn-1568. The next 3 helical transmembrane spans lie at Ile-1600 to Val-1620, Ile-1626 to Ile-1646, and Met-1653 to Leu-1673. One can recognise a DEK-C domain in the interval Leu-1794–Ser-1849.

It in the N-terminal section; belongs to the TRAFAC class myosin-kinesin ATPase superfamily. Myosin family. In the C-terminal section; belongs to the chitin synthase family. Class V subfamily. As to quaternary structure, binds F-actin via its N-terminal myosin motor-like domain (MMD). Interacts with kibesin kinA.

Its subcellular location is the cell membrane. The protein resides in the cell septum. It localises to the cell tip. It catalyses the reaction [(1-&gt;4)-N-acetyl-beta-D-glucosaminyl](n) + UDP-N-acetyl-alpha-D-glucosamine = [(1-&gt;4)-N-acetyl-beta-D-glucosaminyl](n+1) + UDP + H(+). In terms of biological role, polymerizes chitin, a structural polymer of the cell wall and septum, by transferring the sugar moiety of UDP-GlcNAc to the non-reducing end of the growing chitin polymer. Plays an important role in polarized hyphal cell wall synthesis and maintenance of cell wall integrity. Its role in growth and morphogenesis is particularly important under low osmotic conditions. The polypeptide is Chitin synthase csmA (Emericella nidulans (Aspergillus nidulans)).